The following is a 152-amino-acid chain: UPF0756 membrane protein Helmi_09930 (152 aa).

The next 5 helical transmembrane spans lie at 6 to 26, 52 to 72, 75 to 95, 111 to 131, and 132 to 152; these read VLLI…TALA, TGLI…KVGL, VLLS…VLAT, IIVG…GIPV, and GPLM…WLSK.

It belongs to the UPF0756 family.

The protein localises to the cell membrane. This Heliobacterium modesticaldum (strain ATCC 51547 / Ice1) protein is UPF0756 membrane protein Helmi_09930.